A 477-amino-acid chain; its full sequence is Bifunctional protein HldE (477 aa).

The segment at 1–318 (MKVTLPEFER…ENAVRGRADT (318 aa)) is ribokinase. Residue lysine 179 is modified to N6-acetyllysine. ATP is bound at residue 195–198 (NLSE). Aspartate 264 is a catalytic residue. Positions 344–477 (MTNGVFDILH…IKKIQLDKKG (134 aa)) are cytidylyltransferase.

This sequence in the N-terminal section; belongs to the carbohydrate kinase PfkB family. In the C-terminal section; belongs to the cytidylyltransferase family. In terms of assembly, homodimer.

The enzyme catalyses D-glycero-beta-D-manno-heptose 7-phosphate + ATP = D-glycero-beta-D-manno-heptose 1,7-bisphosphate + ADP + H(+). The catalysed reaction is D-glycero-beta-D-manno-heptose 1-phosphate + ATP + H(+) = ADP-D-glycero-beta-D-manno-heptose + diphosphate. The protein operates within nucleotide-sugar biosynthesis; ADP-L-glycero-beta-D-manno-heptose biosynthesis; ADP-L-glycero-beta-D-manno-heptose from D-glycero-beta-D-manno-heptose 7-phosphate: step 1/4. Its pathway is nucleotide-sugar biosynthesis; ADP-L-glycero-beta-D-manno-heptose biosynthesis; ADP-L-glycero-beta-D-manno-heptose from D-glycero-beta-D-manno-heptose 7-phosphate: step 3/4. Functionally, catalyzes the phosphorylation of D-glycero-D-manno-heptose 7-phosphate at the C-1 position to selectively form D-glycero-beta-D-manno-heptose-1,7-bisphosphate. Its function is as follows. Catalyzes the ADP transfer from ATP to D-glycero-beta-D-manno-heptose 1-phosphate, yielding ADP-D-glycero-beta-D-manno-heptose. In Escherichia coli O81 (strain ED1a), this protein is Bifunctional protein HldE.